A 199-amino-acid polypeptide reads, in one-letter code: Probable cobalt-precorrin-6B C(15)-methyltransferase (decarboxylating) (199 aa).

S-adenosyl-L-methionine is bound by residues T24, 48 to 52 (GCGTG), D72, and A101.

Belongs to the methyltransferase superfamily. Archaeal-type CbiT family.

The catalysed reaction is Co-precorrin-6B + S-adenosyl-L-methionine = Co-precorrin-7 + S-adenosyl-L-homocysteine + CO2. It participates in cofactor biosynthesis; adenosylcobalamin biosynthesis; cob(II)yrinate a,c-diamide from sirohydrochlorin (anaerobic route): step 8/10. In terms of biological role, catalyzes the methylation of C-15 in cobalt-precorrin-6B followed by the decarboxylation of C-12 to form cobalt-precorrin-7. This chain is Probable cobalt-precorrin-6B C(15)-methyltransferase (decarboxylating), found in Saccharolobus solfataricus (strain ATCC 35092 / DSM 1617 / JCM 11322 / P2) (Sulfolobus solfataricus).